The following is a 322-amino-acid chain: Exosome complex component RRP4 homolog (322 aa).

The 79-residue stretch at G94–R172 folds into the S1 motif domain. Residues G182–E237 enclose the KH domain.

This sequence belongs to the RRP4 family. As to quaternary structure, component of the RNA exosome complex. Interacts with RPP41. As to expression, expressed in roots, stems, rosette and cauline leaves, flowers and siliques.

It is found in the cytoplasm. Its subcellular location is the nucleus. The protein localises to the nucleolus. Its function is as follows. Non-catalytic component of the RNA exosome complex which has 3'-&gt;5' exoribonuclease activity and participates in a multitude of cellular RNA processing, maturation and degradation events. In vitro, is an active and distributive 3'-&gt;5' exonuclease requiring a free 3'-OH on the substrate and releasing nucleoside 5'-monophosphates. Required for normal embryo development. This chain is Exosome complex component RRP4 homolog, found in Arabidopsis thaliana (Mouse-ear cress).